Here is a 184-residue protein sequence, read N- to C-terminus: ATP synthase subunit b, chloroplastic (184 aa).

The helical transmembrane segment at 27-49 (LATNPINLSVVLGVLIFFGKGVL) threads the bilayer.

It belongs to the ATPase B chain family. In terms of assembly, F-type ATPases have 2 components, F(1) - the catalytic core - and F(0) - the membrane proton channel. F(1) has five subunits: alpha(3), beta(3), gamma(1), delta(1), epsilon(1). F(0) has four main subunits: a(1), b(1), b'(1) and c(10-14). The alpha and beta chains form an alternating ring which encloses part of the gamma chain. F(1) is attached to F(0) by a central stalk formed by the gamma and epsilon chains, while a peripheral stalk is formed by the delta, b and b' chains.

Its subcellular location is the plastid. It is found in the chloroplast thylakoid membrane. Functionally, f(1)F(0) ATP synthase produces ATP from ADP in the presence of a proton or sodium gradient. F-type ATPases consist of two structural domains, F(1) containing the extramembraneous catalytic core and F(0) containing the membrane proton channel, linked together by a central stalk and a peripheral stalk. During catalysis, ATP synthesis in the catalytic domain of F(1) is coupled via a rotary mechanism of the central stalk subunits to proton translocation. Its function is as follows. Component of the F(0) channel, it forms part of the peripheral stalk, linking F(1) to F(0). The chain is ATP synthase subunit b, chloroplastic from Populus alba (White poplar).